The chain runs to 155 residues: Endoribonuclease YbeY (155 aa).

Residues His119, His123, and His129 each coordinate Zn(2+).

It belongs to the endoribonuclease YbeY family. It depends on Zn(2+) as a cofactor.

It is found in the cytoplasm. Single strand-specific metallo-endoribonuclease involved in late-stage 70S ribosome quality control and in maturation of the 3' terminus of the 16S rRNA. The sequence is that of Endoribonuclease YbeY from Mycoplasmopsis synoviae (strain 53) (Mycoplasma synoviae).